The sequence spans 237 residues: 7-cyano-7-deazaguanine synthase (237 aa).

Residue 9 to 19 (YSGGLDSTTCL) coordinates ATP. Zn(2+) is bound by residues Cys-189, Cys-199, Cys-202, and Cys-205.

Belongs to the QueC family. Zn(2+) serves as cofactor.

The enzyme catalyses 7-carboxy-7-deazaguanine + NH4(+) + ATP = 7-cyano-7-deazaguanine + ADP + phosphate + H2O + H(+). The protein operates within purine metabolism; 7-cyano-7-deazaguanine biosynthesis. Catalyzes the ATP-dependent conversion of 7-carboxy-7-deazaguanine (CDG) to 7-cyano-7-deazaguanine (preQ(0)). In Geobacter sulfurreducens (strain ATCC 51573 / DSM 12127 / PCA), this protein is 7-cyano-7-deazaguanine synthase.